The sequence spans 119 residues: Ribonuclease P protein component (119 aa).

This sequence belongs to the RnpA family. As to quaternary structure, consists of a catalytic RNA component (M1 or rnpB) and a protein subunit.

It carries out the reaction Endonucleolytic cleavage of RNA, removing 5'-extranucleotides from tRNA precursor.. In terms of biological role, RNaseP catalyzes the removal of the 5'-leader sequence from pre-tRNA to produce the mature 5'-terminus. It can also cleave other RNA substrates such as 4.5S RNA. The protein component plays an auxiliary but essential role in vivo by binding to the 5'-leader sequence and broadening the substrate specificity of the ribozyme. This Streptococcus mutans serotype c (strain ATCC 700610 / UA159) protein is Ribonuclease P protein component.